A 575-amino-acid polypeptide reads, in one-letter code: Phosphoenolpyruvate-protein phosphotransferase (575 aa).

His-191 acts as the Tele-phosphohistidine intermediate in catalysis. Phosphoenolpyruvate contacts are provided by Arg-298 and Arg-334. Mg(2+)-binding residues include Glu-435 and Asp-459. Phosphoenolpyruvate is bound by residues 458 to 459 and Arg-469; that span reads ND. Cys-506 serves as the catalytic Proton donor.

Belongs to the PEP-utilizing enzyme family. Homodimer. The cofactor is Mg(2+).

It is found in the cytoplasm. The enzyme catalyses L-histidyl-[protein] + phosphoenolpyruvate = N(pros)-phospho-L-histidyl-[protein] + pyruvate. In terms of biological role, general (non sugar-specific) component of the phosphoenolpyruvate-dependent sugar phosphotransferase system (sugar PTS). This major carbohydrate active-transport system catalyzes the phosphorylation of incoming sugar substrates concomitantly with their translocation across the cell membrane. Enzyme I transfers the phosphoryl group from phosphoenolpyruvate (PEP) to the phosphoryl carrier protein (HPr). In Enterococcus faecalis (strain ATCC 700802 / V583), this protein is Phosphoenolpyruvate-protein phosphotransferase (ptsI).